The following is a 158-amino-acid chain: Ribonuclease H (158 aa).

The 142-residue stretch at 3–144 folds into the RNase H type-1 domain; it reads ELKLIHIFTD…CDQLARAAAE (142 aa). Mg(2+) contacts are provided by Asp-12, Glu-50, Asp-72, and Asp-136.

Belongs to the RNase H family. As to quaternary structure, monomer. Requires Mg(2+) as cofactor.

It localises to the cytoplasm. The enzyme catalyses Endonucleolytic cleavage to 5'-phosphomonoester.. In terms of biological role, endonuclease that specifically degrades the RNA of RNA-DNA hybrids. The sequence is that of Ribonuclease H from Shewanella sp. (strain MR-7).